Consider the following 395-residue polypeptide: ATP phosphoribosyltransferase regulatory subunit (395 aa).

The protein belongs to the class-II aminoacyl-tRNA synthetase family. HisZ subfamily. As to quaternary structure, heteromultimer composed of HisG and HisZ subunits.

Its subcellular location is the cytoplasm. The protein operates within amino-acid biosynthesis; L-histidine biosynthesis; L-histidine from 5-phospho-alpha-D-ribose 1-diphosphate: step 1/9. Required for the first step of histidine biosynthesis. May allow the feedback regulation of ATP phosphoribosyltransferase activity by histidine. The sequence is that of ATP phosphoribosyltransferase regulatory subunit from Pseudomonas putida (strain ATCC 700007 / DSM 6899 / JCM 31910 / BCRC 17059 / LMG 24140 / F1).